The sequence spans 377 residues: MSAPHDPPRPEPRPDLRSLPLDRLERLVAALGERPFRARQLHRWLQQKGAASLDELTDVPRALRAALAEATTLTTLERATEQRSVDGTIKWTWRTHDGKLVESVYMPEPDRRTLCVSSQVGCAVGCTFCLTGTMGLARNLTPGEIVEQVHRANRRIVELGEGQGPRPLTNLVFMGMGEPLANYRSLKVALDLLLSEDGPNFSHRHVTVSTSGLVPMIRKLGEETPVKLAISLNATTDAQRDALMPINRRYPLAQLLEACRSFPIRNGRRITFEYVLLGGVNDSLEDAVRLARLVRGIPTKVNLIPYNANPGLPYRAPAPERVVEFQETLAARNLTAVVRKNRGGDISAACGQLAAEGGPGDPRRPAPPPLTRLPAAG.

E102 (proton acceptor) is an active-site residue. The Radical SAM core domain occupies 108–345 (EPDRRTLCVS…AVVRKNRGGD (238 aa)). A disulfide bridge connects residues C115 and C350. The [4Fe-4S] cluster site is built by C122, C126, and C129. Residues 177-178 (GE), S209, 231-233 (SLN), and N307 contribute to the S-adenosyl-L-methionine site. The active-site S-methylcysteine intermediate is the C350. The disordered stretch occupies residues 354 to 377 (AAEGGPGDPRRPAPPPLTRLPAAG).

It belongs to the radical SAM superfamily. RlmN family. Requires [4Fe-4S] cluster as cofactor.

Its subcellular location is the cytoplasm. It catalyses the reaction adenosine(2503) in 23S rRNA + 2 reduced [2Fe-2S]-[ferredoxin] + 2 S-adenosyl-L-methionine = 2-methyladenosine(2503) in 23S rRNA + 5'-deoxyadenosine + L-methionine + 2 oxidized [2Fe-2S]-[ferredoxin] + S-adenosyl-L-homocysteine. The catalysed reaction is adenosine(37) in tRNA + 2 reduced [2Fe-2S]-[ferredoxin] + 2 S-adenosyl-L-methionine = 2-methyladenosine(37) in tRNA + 5'-deoxyadenosine + L-methionine + 2 oxidized [2Fe-2S]-[ferredoxin] + S-adenosyl-L-homocysteine. In terms of biological role, specifically methylates position 2 of adenine 2503 in 23S rRNA and position 2 of adenine 37 in tRNAs. m2A2503 modification seems to play a crucial role in the proofreading step occurring at the peptidyl transferase center and thus would serve to optimize ribosomal fidelity. This chain is Dual-specificity RNA methyltransferase RlmN, found in Anaeromyxobacter sp. (strain Fw109-5).